A 388-amino-acid chain; its full sequence is STE20-related kinase adapter protein strd-1 (388 aa).

Residues 52–335 enclose the Protein kinase domain; the sequence is YDCVRYMGTC…ASDLKSSAWL (284 aa). ATP contacts are provided by residues 58–66 and Lys82; that span reads MGTCNGGQI.

The protein belongs to the protein kinase superfamily. STE Ser/Thr protein kinase family. STE20 subfamily. Interacts with sad-1. Interacts with par-4. Expressed in nervous system, pharynx and excretory canal. Expressed in germline.

It localises to the perikaryon. The protein resides in the nucleus. Its subcellular location is the cell projection. The protein localises to the dendrite. It is found in the axon. It localises to the synapse. The protein resides in the cytoplasm. Its subcellular location is the cell cortex. Pseudokinase which may act as an adapter for kinases sad-1 and par-4 and thereby is involved in several developmental processes. Regulates cell-autonomously both neuronal polarity and synaptic organization when bound to sad-1. Required for sad-1 localization to synapses. Required to establish germline stem cell (GSC) quiescence during dauer development, to promote cell shedding during embryogenesis and to control asymmetric cell division of the Q.p neuroblast lineage, probably when bound to par-4. May be involved in maintaining the integrity of the early embryonic cortex when bound to par-4. The sequence is that of STE20-related kinase adapter protein strd-1 from Caenorhabditis elegans.